A 470-amino-acid chain; its full sequence is Cyclic AMP-responsive element-binding protein 3-like protein 3 (470 aa).

At 1–319 the chain is on the cytoplasmic side; it reads MDGDISTGKM…TSKPAHAGTC (319 aa). The interval 59-145 is disordered; the sequence is SDSDEFLNSI…PEPPRTQVHE (87 aa). The bZIP domain maps to 239–302; sequence VLKKIRRKIR…LSLLEQLKHL (64 aa). Residues 241 to 270 are basic motif; the sequence is KKIRRKIRNKQSAQESRKKKKEYIDGLENR. The segment at 281 to 302 is leucine-zipper; the sequence is LQRKVLHLEKQNLSLLEQLKHL. Lysine 290 participates in a covalent cross-link: Glycyl lysine isopeptide (Lys-Gly) (interchain with G-Cter in ubiquitin). The chain crosses the membrane as a helical; Signal-anchor for type II membrane protein span at residues 320–340; the sequence is IAVLLLSFVLIILPSISPFTA. Residues 341–470 are Lumenal-facing; that stretch reads NKVDSPGDFI…RVVQDALGVL (130 aa). Residues asparagine 410 and asparagine 417 are each glycosylated (N-linked (GlcNAc...) asparagine).

The protein belongs to the bZIP family. ATF subfamily. Binds DNA as a dimer. May form homodimers. Interacts with ATF6. Interacts with SYNV1/HRD1; this interaction leads to CREB3L3 ubiquitination and proteasomal degradation. Controlled by regulated intramembrane proteolysis (RIP). Following ER stress a fragment containing the cytoplasmic transcription factor domain is released by proteolysis. The cleavage seems to be performed sequentially by site-1 and site-2 proteases (PS1 and PS2). In terms of processing, N-glycosylation is required for optimal proteolytic activation. Post-translationally, ubiquitinated at Lys-290 by SYNV1/HRD1 via 'Lys-27'-linked ubiquitin.

The protein localises to the endoplasmic reticulum membrane. The protein resides in the nucleus. In terms of biological role, transcription factor that may act during endoplasmic reticulum stress by activating unfolded protein response target genes. Activated in response to cAMP stimulation. Binds the cAMP response element (CRE). Activates transcription through box-B element and CRE. Seems to function synergistically with ATF6. In acute inflammatory response, may activate expression of acute phase response (APR) genes. May be involved in growth suppression. Regulates FGF21 transcription. Plays a crucial role in the regulation of triglyceride metabolism and is required for the maintenance of normal plasma triglyceride concentrations. This Rattus norvegicus (Rat) protein is Cyclic AMP-responsive element-binding protein 3-like protein 3 (Creb3l3).